The following is a 464-amino-acid chain: Trigger factor (464 aa).

The region spanning 162–243 (GDFISIDLSA…VGTVKERELP (82 aa)) is the PPIase FKBP-type domain. A disordered region spans residues 428–464 (GASVDTAELFGNGEADTEEAASTDEVASDSAEGEDQK).

This sequence belongs to the FKBP-type PPIase family. Tig subfamily.

The protein localises to the cytoplasm. It carries out the reaction [protein]-peptidylproline (omega=180) = [protein]-peptidylproline (omega=0). In terms of biological role, involved in protein export. Acts as a chaperone by maintaining the newly synthesized protein in an open conformation. Functions as a peptidyl-prolyl cis-trans isomerase. The polypeptide is Trigger factor (Rhodococcus opacus (strain B4)).